The primary structure comprises 379 residues: Alanine racemase (379 aa).

K41 functions as the Proton acceptor; specific for D-alanine in the catalytic mechanism. K41 is subject to N6-(pyridoxal phosphate)lysine. R138 contacts substrate. Catalysis depends on Y260, which acts as the Proton acceptor; specific for L-alanine. M319 serves as a coordination point for substrate.

This sequence belongs to the alanine racemase family. Pyridoxal 5'-phosphate is required as a cofactor.

It catalyses the reaction L-alanine = D-alanine. The protein operates within amino-acid biosynthesis; D-alanine biosynthesis; D-alanine from L-alanine: step 1/1. In terms of biological role, catalyzes the interconversion of L-alanine and D-alanine. May also act on other amino acids. This Rhizobium meliloti (strain 1021) (Ensifer meliloti) protein is Alanine racemase (alr).